Reading from the N-terminus, the 221-residue chain is MIIAIDGPSASGKSSIARELSVKLGFKFISSGYLYRIITLIAQRSFISGCDFISENRLLNLVLENDISFNDSSFLLNGENVENQILNDKIDFQVSFYSSYIGIRNIVNKKLREVVKFSDDNYIIEGRDITTIVFPESEFKIYLDASIKVRALRRYKQRNGNETLEELERTLKIRDDVDKNKQYGKLELSKGVFYLDTSYKGLDDVCNIIIEKFNLKKVRER.

An ATP-binding site is contributed by 7 to 15 (GPSASGKSS).

This sequence belongs to the cytidylate kinase family. Type 1 subfamily.

Its subcellular location is the cytoplasm. The enzyme catalyses CMP + ATP = CDP + ADP. It catalyses the reaction dCMP + ATP = dCDP + ADP. In Borreliella afzelii (strain PKo) (Borrelia afzelii), this protein is Cytidylate kinase 1.